The chain runs to 185 residues: Probable chorismate pyruvate-lyase 2 (185 aa).

Residues Arg-80, Leu-118, and Glu-170 each coordinate substrate.

The protein belongs to the UbiC family.

The protein resides in the cytoplasm. The enzyme catalyses chorismate = 4-hydroxybenzoate + pyruvate. Its pathway is cofactor biosynthesis; ubiquinone biosynthesis. Functionally, removes the pyruvyl group from chorismate, with concomitant aromatization of the ring, to provide 4-hydroxybenzoate (4HB) for the ubiquinone pathway. This is Probable chorismate pyruvate-lyase 2 from Pseudomonas entomophila (strain L48).